A 445-amino-acid chain; its full sequence is Tyrosine--tRNA ligase, mitochondrial (445 aa).

Tyr33 is an L-tyrosine binding site. Asp37 contributes to the ATP binding site. Positions 38 to 47 match the 'HIGH' region motif; the sequence is PTAASLHVGN. L-tyrosine is bound by residues Asp77, Tyr184, Gln188, Asp191, and Gln210. A 'KMSKS' region motif is present at residues 245–249; that stretch reads KLGKS. Lys248 provides a ligand contact to ATP. Residues 384 to 445 enclose the S4 RNA-binding domain; it reads QPFSRLLRTL…GKRTFVLDSL (62 aa).

The protein belongs to the class-I aminoacyl-tRNA synthetase family. As to quaternary structure, homodimer.

Its subcellular location is the mitochondrion matrix. The catalysed reaction is tRNA(Tyr) + L-tyrosine + ATP = L-tyrosyl-tRNA(Tyr) + AMP + diphosphate + H(+). Catalyzes the attachment of tyrosine to tRNA(Tyr) in a two-step reaction: tyrosine is first activated by ATP to form Tyr-AMP and then transferred to the acceptor end of tRNA(Tyr). This is Tyrosine--tRNA ligase, mitochondrial from Schizosaccharomyces pombe (strain 972 / ATCC 24843) (Fission yeast).